The following is a 532-amino-acid chain: Phosphoenolpyruvate carboxykinase (ATP) (532 aa).

R60, Y194, and K200 together coordinate substrate. ATP-binding positions include K200, H219, and 237–245 (GLSGTGKTT). Residues K200 and H219 each coordinate Mn(2+). Residue D258 participates in Mn(2+) binding. Residues E286, R324, and T449 each contribute to the ATP site. A substrate-binding site is contributed by R324.

The protein belongs to the phosphoenolpyruvate carboxykinase (ATP) family. Mn(2+) is required as a cofactor.

It is found in the cytoplasm. It catalyses the reaction oxaloacetate + ATP = phosphoenolpyruvate + ADP + CO2. It functions in the pathway carbohydrate biosynthesis; gluconeogenesis. Its function is as follows. Involved in the gluconeogenesis. Catalyzes the conversion of oxaloacetate (OAA) to phosphoenolpyruvate (PEP) through direct phosphoryl transfer between the nucleoside triphosphate and OAA. In Ruegeria pomeroyi (strain ATCC 700808 / DSM 15171 / DSS-3) (Silicibacter pomeroyi), this protein is Phosphoenolpyruvate carboxykinase (ATP).